Consider the following 206-residue polypeptide: Large ribosomal subunit protein uL4 (206 aa).

The disordered stretch occupies residues Gln45–Gly85. Residues His58–Gly70 show a composition bias toward basic residues.

The protein belongs to the universal ribosomal protein uL4 family. In terms of assembly, part of the 50S ribosomal subunit.

Functionally, one of the primary rRNA binding proteins, this protein initially binds near the 5'-end of the 23S rRNA. It is important during the early stages of 50S assembly. It makes multiple contacts with different domains of the 23S rRNA in the assembled 50S subunit and ribosome. Forms part of the polypeptide exit tunnel. The sequence is that of Large ribosomal subunit protein uL4 from Burkholderia mallei (strain NCTC 10247).